A 212-amino-acid polypeptide reads, in one-letter code: Redox-sensing transcriptional repressor Rex (212 aa).

A DNA-binding region (H-T-H motif) is located at residues 17 to 56 (LYARSLRYLLEEGIHSVSSQELGERINVTAAQIRKDLSYF). 91-96 (GIGLLG) provides a ligand contact to NAD(+).

The protein belongs to the transcriptional regulatory Rex family. In terms of assembly, homodimer.

Its subcellular location is the cytoplasm. Modulates transcription in response to changes in cellular NADH/NAD(+) redox state. The polypeptide is Redox-sensing transcriptional repressor Rex (Chloroflexus aggregans (strain MD-66 / DSM 9485)).